A 605-amino-acid polypeptide reads, in one-letter code: Exonuclease V, mitochondrial (605 aa).

A mitochondrion-targeting transit peptide spans 1–17 (MSLNFLKRYLSRSTRNF). [4Fe-4S] cluster is bound by residues Cys-140, Cys-563, Cys-566, and Cys-572.

This sequence belongs to the EXO5 family. Monomer. Mg(2+) is required as a cofactor. The cofactor is [4Fe-4S] cluster.

It is found in the mitochondrion. Its function is as follows. Single strand DNA specific 5' exonuclease involved in mitochondrial DNA replication and recombination. Releases dinucleotides as main products of catalysis. Has the capacity to slide across 5'double-stranded DNA or 5'RNA sequences and resumes cutting two nucleotides downstream of the double-stranded-to-single-stranded junction or RNA-to-DNA junction, respectively. The sequence is that of Exonuclease V, mitochondrial (EXO5) from Candida tropicalis (strain ATCC MYA-3404 / T1) (Yeast).